The sequence spans 1151 residues: Protein BREAST CANCER SUSCEPTIBILITY 2 homolog A (1151 aa).

4 BRCA2 repeats span residues 63-97 (MPGE…EKVT), 116-150 (TAET…SDKI), 163-197 (FGVS…LEED), and 257-291 (LKVP…DPEL). Residues 408–427 (GFIPRGRQPGRPADQPLVDI) form a disordered region.

As to quaternary structure, interacts with RAD51 and DMC1. Interacts with DSS1(I). In terms of tissue distribution, expressed in flower buds.

Involved in double-strand break repair and/or homologous recombination by mediating RAD51- and DMC1-facilitated DNA repair. Plays an essential role in both somatic and meiotic homologous recombination. Is crucial for the formation of RAD51 and DMC1 foci during male meiotic homologous recombination in prophase I. This chain is Protein BREAST CANCER SUSCEPTIBILITY 2 homolog A, found in Arabidopsis thaliana (Mouse-ear cress).